Here is a 181-residue protein sequence, read N- to C-terminus: 3-hydroxyacyl-[acyl-carrier-protein] dehydratase FabZ (181 aa).

Histidine 54 is an active-site residue.

The protein belongs to the thioester dehydratase family. FabZ subfamily.

The protein localises to the cytoplasm. It carries out the reaction a (3R)-hydroxyacyl-[ACP] = a (2E)-enoyl-[ACP] + H2O. Involved in unsaturated fatty acids biosynthesis. Catalyzes the dehydration of short chain beta-hydroxyacyl-ACPs and long chain saturated and unsaturated beta-hydroxyacyl-ACPs. This chain is 3-hydroxyacyl-[acyl-carrier-protein] dehydratase FabZ, found in Yersinia pestis.